The chain runs to 126 residues: Large ribosomal subunit protein bL12 (126 aa).

The protein belongs to the bacterial ribosomal protein bL12 family. In terms of assembly, homodimer. Part of the ribosomal stalk of the 50S ribosomal subunit. Forms a multimeric L10(L12)X complex, where L10 forms an elongated spine to which 2 to 4 L12 dimers bind in a sequential fashion. Binds GTP-bound translation factors.

Functionally, forms part of the ribosomal stalk which helps the ribosome interact with GTP-bound translation factors. Is thus essential for accurate translation. The chain is Large ribosomal subunit protein bL12 from Nocardia farcinica (strain IFM 10152).